We begin with the raw amino-acid sequence, 117 residues long: Immunoglobulin kappa variable 1-16 (117 aa).

The N-terminal stretch at 1-22 (MDMRVLAQLLGLLLLCFPGARC) is a signal peptide. Positions 23–45 (DIQMTQSPSSLSASVGDRVTITC) are framework-1. Residues 24–117 (IQMTQSPSSL…YYCQQYNSYP (94 aa)) enclose the Ig-like domain. Cys45 and Cys110 are joined by a disulfide. A complementarity-determining-1 region spans residues 46–56 (RASQGISNYLA). The tract at residues 57-71 (WFQQKPGKAPKSLIY) is framework-2. The tract at residues 72–78 (AASSLQS) is complementarity-determining-2. The tract at residues 79–110 (GVPSKFSGSGSGTDFTLTISSLQPEDFATYYC) is framework-3. Residues 111 to 117 (QQYNSYP) form a complementarity-determining-3 region.

Immunoglobulins are composed of two identical heavy chains and two identical light chains; disulfide-linked.

Its subcellular location is the secreted. The protein localises to the cell membrane. Its function is as follows. V region of the variable domain of immunoglobulin light chains that participates in the antigen recognition. Immunoglobulins, also known as antibodies, are membrane-bound or secreted glycoproteins produced by B lymphocytes. In the recognition phase of humoral immunity, the membrane-bound immunoglobulins serve as receptors which, upon binding of a specific antigen, trigger the clonal expansion and differentiation of B lymphocytes into immunoglobulins-secreting plasma cells. Secreted immunoglobulins mediate the effector phase of humoral immunity, which results in the elimination of bound antigens. The antigen binding site is formed by the variable domain of one heavy chain, together with that of its associated light chain. Thus, each immunoglobulin has two antigen binding sites with remarkable affinity for a particular antigen. The variable domains are assembled by a process called V-(D)-J rearrangement and can then be subjected to somatic hypermutations which, after exposure to antigen and selection, allow affinity maturation for a particular antigen. The sequence is that of Immunoglobulin kappa variable 1-16 from Homo sapiens (Human).